Reading from the N-terminus, the 74-residue chain is Exodeoxyribonuclease 7 small subunit (74 aa).

The protein belongs to the XseB family. Heterooligomer composed of large and small subunits.

The protein resides in the cytoplasm. It catalyses the reaction Exonucleolytic cleavage in either 5'- to 3'- or 3'- to 5'-direction to yield nucleoside 5'-phosphates.. Functionally, bidirectionally degrades single-stranded DNA into large acid-insoluble oligonucleotides, which are then degraded further into small acid-soluble oligonucleotides. This is Exodeoxyribonuclease 7 small subunit from Glaesserella parasuis serovar 5 (strain SH0165) (Haemophilus parasuis).